Reading from the N-terminus, the 302-residue chain is Putative 2-dehydro-3-deoxy-D-gluconate aldolase YagE (302 aa).

Residues Ser49 and Tyr112 each act as charge relay system in the active site. Tyr138 acts as the Proton donor in catalysis. Lys167 acts as the Schiff-base intermediate with substrate in catalysis.

It belongs to the DapA family. As to quaternary structure, a dimer of dimers.

It is found in the cytoplasm. The enzyme catalyses 2-dehydro-3-deoxy-D-gluconate = D-glyceraldehyde + pyruvate. It carries out the reaction 2-dehydro-3-deoxy-D-arabinonate = glycolaldehyde + pyruvate. Catalyzes the formation of 2-keto-3-deoxy-gluconate (KDG) from pyruvate and glyceraldehyde. May also function as a 2-dehydro-3-deoxy-D-pentonate aldolase. Overexpression leads to increased growth (over 2 hours) in the presence of the antibiotics norfloxacin, ampicillin and streptomycin. The protein is Putative 2-dehydro-3-deoxy-D-gluconate aldolase YagE (yagE) of Escherichia coli (strain K12).